We begin with the raw amino-acid sequence, 599 residues long: Cytosolic Fe-S cluster assembly factor nar1 (599 aa).

8 residues coordinate [4Fe-4S] cluster: Cys20, Cys62, Cys65, Cys68, Cys210, Cys265, Cys468, and Cys472.

Belongs to the NARF family.

Its function is as follows. Component of the cytosolic Fe/S protein assembly machinery. Required for maturation of extramitochondrial Fe/S proteins. May play a role in the transfer of pre-assembled Fe/S clusters to target apoproteins. The protein is Cytosolic Fe-S cluster assembly factor nar1 (nar1) of Aspergillus terreus (strain NIH 2624 / FGSC A1156).